We begin with the raw amino-acid sequence, 303 residues long: Oxygen-dependent coproporphyrinogen-III oxidase (303 aa).

Ser93 is a substrate binding site. A divalent metal cation contacts are provided by His97 and His107. Residue His107 is the Proton donor of the active site. 109 to 111 lines the substrate pocket; sequence NVR. A divalent metal cation is bound by residues His146 and His176. The tract at residues 241–276 is important for dimerization; that stretch reads YVEFNLVYDRGTLFGLQSGGRTESILMSLPPQVRWG. Substrate is bound at residue 259–261; it reads GGR.

This sequence belongs to the aerobic coproporphyrinogen-III oxidase family. Homodimer. A divalent metal cation serves as cofactor.

The protein resides in the cytoplasm. It catalyses the reaction coproporphyrinogen III + O2 + 2 H(+) = protoporphyrinogen IX + 2 CO2 + 2 H2O. Its pathway is porphyrin-containing compound metabolism; protoporphyrin-IX biosynthesis; protoporphyrinogen-IX from coproporphyrinogen-III (O2 route): step 1/1. In terms of biological role, involved in the heme biosynthesis. Catalyzes the aerobic oxidative decarboxylation of propionate groups of rings A and B of coproporphyrinogen-III to yield the vinyl groups in protoporphyrinogen-IX. The sequence is that of Oxygen-dependent coproporphyrinogen-III oxidase from Pseudomonas entomophila (strain L48).